The following is a 359-amino-acid chain: Endoglucanase (359 aa).

An N-terminal signal peptide occupies residues 1–23 (MPLRALVAVIVTTAVMLVPRAWA). Glu53 serves as the catalytic Proton donor. The active-site Nucleophile is the Asp110.

The protein belongs to the glycosyl hydrolase 8 (cellulase D) family.

It carries out the reaction Endohydrolysis of (1-&gt;4)-beta-D-glucosidic linkages in cellulose, lichenin and cereal beta-D-glucans.. The biological conversion of cellulose to glucose generally requires three types of hydrolytic enzymes: (1) Endoglucanases which cut internal beta-1,4-glucosidic bonds; (2) Exocellobiohydrolases that cut the disaccharide cellobiose from the non-reducing end of the cellulose polymer chain; (3) Beta-1,4-glucosidases which hydrolyze the cellobiose and other short cello-oligosaccharides to glucose. The sequence is that of Endoglucanase from Cellulomonas uda.